Consider the following 460-residue polypeptide: Probable asparagine--tRNA ligase, mitochondrial (460 aa).

The protein belongs to the class-II aminoacyl-tRNA synthetase family.

The protein resides in the mitochondrion matrix. The catalysed reaction is tRNA(Asn) + L-asparagine + ATP = L-asparaginyl-tRNA(Asn) + AMP + diphosphate + H(+). In Dictyostelium discoideum (Social amoeba), this protein is Probable asparagine--tRNA ligase, mitochondrial (asnS2).